Consider the following 315-residue polypeptide: Olfactory receptor 2T5 (315 aa).

Residues 1-29 (MANITRMANHTGKLDFILMGLFRRSKHPA) lie on the Extracellular side of the membrane. N-linked (GlcNAc...) asparagine glycosylation is found at asparagine 3 and asparagine 9. The chain crosses the membrane as a helical span at residues 30-53 (LLSVVIFVVFLKALSGNAVLILLI). Topologically, residues 54 to 61 (HCDAHLHS) are cytoplasmic. A helical transmembrane segment spans residues 62–83 (PMYFFISQLSLMDMAYISVTVP). At 84-104 (KMLLDQVMGVNKVSAPECGMQ) the chain is on the extracellular side. Cysteine 101 and cysteine 193 are joined by a disulfide. The helical transmembrane segment at 105–124 (MFLYLTLAGSEFFLLATMAY) threads the bilayer. Topologically, residues 125–143 (DRYVAICHPLRYPVLMNHR) are cytoplasmic. A helical membrane pass occupies residues 144-162 (VCLFLASGCWFLGSVDGFM). The Extracellular portion of the chain corresponds to 163 to 199 (LTPITMSFPFCRSWEIHHFFCEVPAVTILSCSDTSLY). A helical membrane pass occupies residues 200 to 223 (ETLMYLCCVLMLLIPVTIISSSYL). At 224–240 (LILLTVHRMNSAEGRKK) the chain is on the cytoplasmic side. Residues 241–263 (AFATCSSHLTVVILFYGAAVYTY) form a helical membrane-spanning segment. The Extracellular portion of the chain corresponds to 264–276 (MLPSSYHTPEKDM). A helical membrane pass occupies residues 277–296 (MVSVFYTILTPVLNPLIYSL). At 297-315 (RNKDVMGALKKMLTVRFVL) the chain is on the cytoplasmic side.

Belongs to the G-protein coupled receptor 1 family.

It localises to the cell membrane. Functionally, odorant receptor. The sequence is that of Olfactory receptor 2T5 (OR2T5) from Homo sapiens (Human).